We begin with the raw amino-acid sequence, 350 residues long: Chorismate synthase (350 aa).

Arginine 48 contributes to the NADP(+) binding site. FMN-binding positions include 125 to 127 (RSS), glycine 277, 292 to 296 (KPIPS), and arginine 318.

It belongs to the chorismate synthase family. As to quaternary structure, homotetramer. FMNH2 serves as cofactor.

It catalyses the reaction 5-O-(1-carboxyvinyl)-3-phosphoshikimate = chorismate + phosphate. It participates in metabolic intermediate biosynthesis; chorismate biosynthesis; chorismate from D-erythrose 4-phosphate and phosphoenolpyruvate: step 7/7. In terms of biological role, catalyzes the anti-1,4-elimination of the C-3 phosphate and the C-6 proR hydrogen from 5-enolpyruvylshikimate-3-phosphate (EPSP) to yield chorismate, which is the branch point compound that serves as the starting substrate for the three terminal pathways of aromatic amino acid biosynthesis. This reaction introduces a second double bond into the aromatic ring system. This is Chorismate synthase from Maridesulfovibrio salexigens (strain ATCC 14822 / DSM 2638 / NCIMB 8403 / VKM B-1763) (Desulfovibrio salexigens).